A 315-amino-acid chain; its full sequence is NADH-cytochrome b5 reductase-like (315 aa).

In terms of domain architecture, Oxidoreductase-like spans 19–55 (RPTEPLPSQCCGSGCSPCVFDLYHRDLARWEAAQASK). The 103-residue stretch at 75 to 177 (ETFVAFCIIA…RGPFGDFFYK (103 aa)) folds into the FAD-binding FR-type domain. FAD-binding positions include 157–172 (ESWRVGDTAFWRGPFG) and 182–214 (GELLLLAAGTGLAPMVPILQSITDNENDETFVT).

It belongs to the flavoprotein pyridine nucleotide cytochrome reductase family. FAD serves as cofactor.

The enzyme catalyses 2 Fe(III)-[cytochrome b5] + NADH = 2 Fe(II)-[cytochrome b5] + NAD(+) + H(+). NADH-cytochrome b5 reductases are involved in desaturation and elongation of fatty acids, cholesterol biosynthesis, drug metabolism, and, in erythrocyte, methemoglobin reduction. The sequence is that of NADH-cytochrome b5 reductase-like (CYB5RL) from Homo sapiens (Human).